Reading from the N-terminus, the 222-residue chain is MESPEKFTNSKEVIAFLAETFPKCFSIEGEARPLKIGIFQDLAERLEEDERVSKTLLRSTLRHYTNSWRYLYSIKEGANRVDLDGVEGDAIEKEHADHAKQQLDESKAKAAEKRKAKLAQQPKRKDKRQFNRPKGEKSANSDHADTKRGTKPKNNRPNTTPPAKLTDSDLQQGTQVTVKLGKAPMPAVITEVAKDGIHVQLDSGMVVKVNADALRLARSKRS.

Over residues 94-113 (EHADHAKQQLDESKAKAAEK) the composition is skewed to basic and acidic residues. The disordered stretch occupies residues 94–171 (EHADHAKQQL…PAKLTDSDLQ (78 aa)). Over residues 114 to 131 (RKAKLAQQPKRKDKRQFN) the composition is skewed to basic residues. The span at 133 to 148 (PKGEKSANSDHADTKR) shows a compositional bias: basic and acidic residues. Residues 155–164 (NRPNTTPPAK) show a composition bias toward low complexity.

It belongs to the ProQ family.

The protein localises to the cytoplasm. Functionally, RNA chaperone with significant RNA binding, RNA strand exchange and RNA duplexing activities. The chain is RNA chaperone ProQ from Alteromonas mediterranea (strain DSM 17117 / CIP 110805 / LMG 28347 / Deep ecotype).